Reading from the N-terminus, the 360-residue chain is Protein Wnt-2 (360 aa).

The N-terminal stretch at 1–25 is a signal peptide; the sequence is MNSPLRGIWLWLPLLLTWLTPEVSS. 11 disulfides stabilise this stretch: cysteine 76–cysteine 87, cysteine 127–cysteine 135, cysteine 137–cysteine 157, cysteine 206–cysteine 220, cysteine 208–cysteine 215, cysteine 278–cysteine 309, cysteine 294–cysteine 304, cysteine 308–cysteine 348, cysteine 324–cysteine 339, cysteine 326–cysteine 336, and cysteine 331–cysteine 332. Serine 212 carries O-palmitoleoyl serine; by PORCN lipidation. Asparagine 295 carries an N-linked (GlcNAc...) asparagine glycan.

It belongs to the Wnt family. In terms of processing, palmitoleoylation is required for efficient binding to frizzled receptors. Depalmitoleoylation leads to Wnt signaling pathway inhibition.

It localises to the secreted. The protein localises to the extracellular space. The protein resides in the extracellular matrix. Its function is as follows. Ligand for members of the frizzled family of seven transmembrane receptors. Probable developmental protein. May be a signaling molecule which affects the development of discrete regions of tissues. Is likely to signal over only few cell diameters. The protein is Protein Wnt-2 (WNT2) of Ateles geoffroyi (Black-handed spider monkey).